The sequence spans 712 residues: Ribosomal RNA large subunit methyltransferase K/L (712 aa).

One can recognise a THUMP domain in the interval 42-153 (QALRIVMWSR…KGRASLSIDL (112 aa)).

It belongs to the methyltransferase superfamily. RlmKL family.

Its subcellular location is the cytoplasm. The catalysed reaction is guanosine(2445) in 23S rRNA + S-adenosyl-L-methionine = N(2)-methylguanosine(2445) in 23S rRNA + S-adenosyl-L-homocysteine + H(+). The enzyme catalyses guanosine(2069) in 23S rRNA + S-adenosyl-L-methionine = N(2)-methylguanosine(2069) in 23S rRNA + S-adenosyl-L-homocysteine + H(+). Its function is as follows. Specifically methylates the guanine in position 2445 (m2G2445) and the guanine in position 2069 (m7G2069) of 23S rRNA. The protein is Ribosomal RNA large subunit methyltransferase K/L of Stenotrophomonas maltophilia (strain R551-3).